A 208-amino-acid chain; its full sequence is UPF0637 protein BcerKBAB4_3786 (208 aa).

The protein belongs to the UPF0637 family.

In Bacillus mycoides (strain KBAB4) (Bacillus weihenstephanensis), this protein is UPF0637 protein BcerKBAB4_3786.